The sequence spans 731 residues: Vezatin (731 aa).

The next 2 membrane-spanning stretches (helical) occupy residues 91–111 and 114–134; these read LATP…LLVM and TWWI…YLVI. A coiled-coil region spans residues 382-414; that stretch reads VRSLQLHLKALLNEVIILEDELEKLVCTKETQE. Disordered stretches follow at residues 570–671 and 710–731; these read PVDP…DSLQ and QTFG…IEEK. The segment covering 577 to 586 has biased composition (polar residues); the sequence is ISNSEPSMNS. Residues 590-601 show a composition bias toward basic and acidic residues; sequence KVSKNDTEEESS. The segment covering 658 to 671 has biased composition (polar residues); it reads GLTTAPPTPRDSLQ. Residues 712–721 show a composition bias toward acidic residues; it reads FGDEEEEQII. Positions 722–731 are enriched in basic and acidic residues; that stretch reads EENKNKIEEK.

Belongs to the vezatin family. As to quaternary structure, interacts with USH2A (via the cytoplasmic region); the interaction associates VEZT with the USH2 complex at the stereocilia base. Interacts with myosin MYO7A and the cadherin-catenins complex.

Its subcellular location is the cell membrane. It localises to the cell projection. The protein resides in the stereocilium membrane. It is found in the cell junction. The protein localises to the adherens junction. Its subcellular location is the nucleus. It localises to the cytoplasmic vesicle. The protein resides in the secretory vesicle. It is found in the acrosome. Functionally, plays a pivotal role in the establishment of adherens junctions and their maintenance in adult life. Required for morphogenesis of the preimplantation embryo, and for the implantation process. This chain is Vezatin (VEZT), found in Pongo abelii (Sumatran orangutan).